A 288-amino-acid polypeptide reads, in one-letter code: Probable anion import ATP-binding protein HVO_1886 (288 aa).

Over residues 1–18 the composition is skewed to basic and acidic residues; the sequence is MTTERPDAGDSGSEKPDE. The disordered stretch occupies residues 1-33; that stretch reads MTTERPDAGDSGSEKPDETAAPDPAANGARRSK. One can recognise an ABC transporter domain in the interval 36–282; it reads LAARSLGHGF…PDDDRVRQFV (247 aa). Residue 68-75 participates in ATP binding; sequence GPSGTGKT.

Belongs to the ABC transporter superfamily. The complex is composed of two ATP-binding proteins (HVO_1886), two transmembrane proteins (HVO_1887) and a solute-binding protein (HVO_1888).

The protein resides in the cell membrane. Its function is as follows. Part of an ABC transporter complex involved in anions import. Responsible for energy coupling to the transport system. This is Probable anion import ATP-binding protein HVO_1886 from Haloferax volcanii (strain ATCC 29605 / DSM 3757 / JCM 8879 / NBRC 14742 / NCIMB 2012 / VKM B-1768 / DS2) (Halobacterium volcanii).